The chain runs to 314 residues: MHAYLHCLSHSPLVGYVDPAQEVLDEVNGVIASARERIAAFSPELVVLFAPDHYNGFFYDVMPPFCLGVGATAIGDFGSAAGELPVPVELAEACAHAVMKSGIDLAVSYCMQVDHGFAQPLEFLLGGLDKVPVLPVFINGVATPLPGFQRTRMLGEAIGRFTSTLNKRVLFLGAGGLSHQPPVPELAKADAHMRDRLLGSGKDLPATERELRQQRVISAAEKFVEDQRTLHPLNPIWDNQFMTLLEQGRIQELDAVSNEELSAIAGKSTHEIKTWVAAFAAISAFGNWRSEGRYYRPIPEWIAGFGSLSARTEN.

His115 serves as the catalytic Proton donor. The Proton acceptor role is filled by His179.

This sequence belongs to the LigB/MhpB extradiol dioxygenase family. Homotetramer. Fe(2+) is required as a cofactor.

The enzyme catalyses 3-(2,3-dihydroxyphenyl)propanoate + O2 = (2Z,4E)-2-hydroxy-6-oxonona-2,4-dienedioate + H(+). The catalysed reaction is (2E)-3-(2,3-dihydroxyphenyl)prop-2-enoate + O2 = (2Z,4E,7E)-2-hydroxy-6-oxonona-2,4,7-trienedioate + H(+). It participates in aromatic compound metabolism; 3-phenylpropanoate degradation. Catalyzes the non-heme iron(II)-dependent oxidative cleavage of 2,3-dihydroxyphenylpropionic acid and 2,3-dihydroxicinnamic acid into 2-hydroxy-6-ketononadienedioate and 2-hydroxy-6-ketononatrienedioate, respectively. This Escherichia coli O81 (strain ED1a) protein is 2,3-dihydroxyphenylpropionate/2,3-dihydroxicinnamic acid 1,2-dioxygenase.